Reading from the N-terminus, the 416-residue chain is UV excision repair protein RAD23 homolog B (416 aa).

The 79-residue stretch at 1 to 79 folds into the Ubiquitin-like domain; sequence MQVTLKTLQQ…VVVMVTKPKA (79 aa). Residues 83 to 111 show a composition bias toward low complexity; the sequence is AVPATTQPSSTPSPTAVSSSPAVAAAQAP. The interval 83–175 is disordered; it reads AVPATTQPSS…STPGDSSRSN (93 aa). Positions 112 to 121 are enriched in pro residues; it reads APTPALPPTS. Positions 122–143 are enriched in low complexity; that stretch reads TPASTAPASTTASSEPAPAGAT. Phosphothreonine is present on threonine 155. A phosphoserine mark is found at serine 160 and serine 174. Threonine 186 bears the Phosphothreonine mark. Residues 188-228 enclose the UBA 1 domain; that stretch reads QSYENMVTEIMSMGYEREQVIAALRASFNNPDRAVEYLLMG. At serine 199 the chain carries Phosphoserine. Tyrosine 202 is subject to Phosphotyrosine. An STI1 domain is found at 274 to 317; it reads HPLEFLRNQPQFQQMRQIIQQNPSLLPALLQQIGRENPQLLQQI. A disordered region spans residues 333–356; the sequence is QEAGSQGGGGGGGGGGGGGGGGGI. Gly residues predominate over residues 337 to 356; that stretch reads SQGGGGGGGGGGGGGGGGGI. The region spanning 371–411 is the UBA 2 domain; that stretch reads PQEKEAIERLKALGFPEGLVIQAYFACEKNENLAANFLLQQ.

It belongs to the RAD23 family. In terms of assembly, component of the XPC complex composed of XPC, RAD23B and CETN2. Interacts with NGLY1 and PSMC1. Interacts with ATXN3. Interacts with AMFR. Interacts with VCP; the interaction is indirect and mediated by NGLY1.

It is found in the nucleus. The protein localises to the cytoplasm. Multiubiquitin chain receptor involved in modulation of proteasomal degradation. Binds to polyubiquitin chains. Proposed to be capable to bind simultaneously to the 26S proteasome and to polyubiquitinated substrates and to deliver ubiquitinated proteins to the proteasome. May play a role in endoplasmic reticulum-associated degradation (ERAD) of misfolded glycoproteins by association with PNGase and delivering deglycosylated proteins to the proteasome. Its function is as follows. Involved in global genome nucleotide excision repair (GG-NER) by acting as component of the XPC complex. Cooperatively with Cetn2 appears to stabilize Xpc. May protect Xpc from proteasomal degradation. In terms of biological role, the XPC complex is proposed to represent the first factor bound at the sites of DNA damage and together with other core recognition factors, Xpa, RPA and the TFIIH complex, is part of the pre-incision (or initial recognition) complex. The XPC complex recognizes a wide spectrum of damaged DNA characterized by distortions of the DNA helix such as single-stranded loops, mismatched bubbles or single-stranded overhangs. The orientation of XPC complex binding appears to be crucial for inducing a productive NER. XPC complex is proposed to recognize and to interact with unpaired bases on the undamaged DNA strand which is followed by recruitment of the TFIIH complex and subsequent scanning for lesions in the opposite strand in a 5'-to-3' direction by the NER machinery. Cyclobutane pyrimidine dimers (CPDs) which are formed upon UV-induced DNA damage esacpe detection by the XPC complex due to a low degree of structural perurbation. Instead they are detected by the UV-DDB complex which in turn recruits and cooperates with the XPC complex in the respective DNA repair. In vitro, the Xpc:Rad23b dimer is sufficient to initiate NER; it preferentially binds to cisplatin and UV-damaged double-stranded DNA and also binds to a variety of chemically and structurally diverse DNA adducts. Xpc:Rad23b contacts DNA both 5' and 3' of a cisplatin lesion with a preference for the 5' side. Xpc:Rad23bB induces a bend in DNA upon binding. Xpc:Rad23b stimulates the activity of DNA glycosylases Tdg and Smug1. The sequence is that of UV excision repair protein RAD23 homolog B (Rad23b) from Mus musculus (Mouse).